Reading from the N-terminus, the 232-residue chain is Flagellar L-ring protein (232 aa).

The N-terminal stretch at 1-15 (MKKVLFYVLPFAFFG) is a signal peptide. Residue Cys-16 is the site of N-palmitoyl cysteine attachment. A lipid anchor (S-diacylglycerol cysteine) is attached at Cys-16.

Belongs to the FlgH family. The basal body constitutes a major portion of the flagellar organelle and consists of four rings (L,P,S, and M) mounted on a central rod.

Its subcellular location is the cell outer membrane. The protein resides in the bacterial flagellum basal body. Assembles around the rod to form the L-ring and probably protects the motor/basal body from shearing forces during rotation. The sequence is that of Flagellar L-ring protein from Campylobacter jejuni subsp. doylei (strain ATCC BAA-1458 / RM4099 / 269.97).